A 101-amino-acid chain; its full sequence is Signal recognition particle 19 kDa protein (101 aa).

The protein belongs to the SRP19 family. Part of the signal recognition particle protein translocation system, which is composed of SRP and FtsY. Archaeal SRP consists of a 7S RNA molecule of 300 nucleotides and two protein subunits: SRP54 and SRP19.

It is found in the cytoplasm. In terms of biological role, involved in targeting and insertion of nascent membrane proteins into the cytoplasmic membrane. Binds directly to 7S RNA and mediates binding of the 54 kDa subunit of the SRP. The sequence is that of Signal recognition particle 19 kDa protein from Methanosarcina mazei (strain ATCC BAA-159 / DSM 3647 / Goe1 / Go1 / JCM 11833 / OCM 88) (Methanosarcina frisia).